We begin with the raw amino-acid sequence, 191 residues long: MGYVIVATGVPGVGATTVTTEAVKELEGYEHVNYGDVMLEIAKEEGLVEHRDEIRKLPAEKQREIQRLAARRIAKMAEEKEGIIVDTHCTIKTPAGYLPGLPIWVLEELQPDVIVLIEADPDEIMMRRVKDSEERQRDYDRAHEIEEHQKMNRMAAMAYAALTGATVKIIENHDDRLEEAVREFVETVRSL.

9–17 is a binding site for ATP; sequence GVPGVGATT.

Belongs to the archaeal adenylate kinase family.

It localises to the cytoplasm. It carries out the reaction AMP + ATP = 2 ADP. The polypeptide is Adenylate kinase (Methanopyrus kandleri (strain AV19 / DSM 6324 / JCM 9639 / NBRC 100938)).